The sequence spans 58 residues: Histatherin (58 aa).

Positions 1 to 19 (MKIFIFIFIMALILAMIRA) are cleaved as a signal peptide.

Belongs to the histatin/statherin family. In terms of tissue distribution, expressed in mammary glands.

Its subcellular location is the secreted. In Bos taurus (Bovine), this protein is Histatherin.